A 488-amino-acid chain; its full sequence is 3-octaprenyl-4-hydroxybenzoate carboxy-lyase (488 aa).

Mn(2+) is bound at residue asparagine 172. Residues 175–177, 189–191, and 194–195 each bind prenylated FMN; these read IYR, RWL, and RG. Residue glutamate 238 participates in Mn(2+) binding. Catalysis depends on aspartate 287, which acts as the Proton donor.

The protein belongs to the UbiD family. Homohexamer. It depends on prenylated FMN as a cofactor. The cofactor is Mn(2+).

It is found in the cell membrane. It catalyses the reaction a 4-hydroxy-3-(all-trans-polyprenyl)benzoate + H(+) = a 2-(all-trans-polyprenyl)phenol + CO2. It participates in cofactor biosynthesis; ubiquinone biosynthesis. Functionally, catalyzes the decarboxylation of 3-octaprenyl-4-hydroxy benzoate to 2-octaprenylphenol, an intermediate step in ubiquinone biosynthesis. This Legionella pneumophila (strain Paris) protein is 3-octaprenyl-4-hydroxybenzoate carboxy-lyase.